An 86-amino-acid polypeptide reads, in one-letter code: Toxin Tpa4 (86 aa).

The signal sequence occupies residues 1–19 (MNYFVLIAVACLLTAGTES). An LCN-type CS-alpha/beta domain is found at 21 to 82 (KDGYPLEYDN…EPIKTSGRCR (62 aa)). Intrachain disulfides connect Cys31-Cys81, Cys35-Cys57, Cys43-Cys64, and Cys47-Cys66. Pro83 carries the proline amide modification.

It belongs to the long (4 C-C) scorpion toxin superfamily. Sodium channel inhibitor family. Alpha subfamily. As to expression, expressed by the venom gland.

Its subcellular location is the secreted. Alpha toxins bind voltage-independently at site-3 of sodium channels (Nav) and inhibit the inactivation of the activated channels, thereby blocking neuronal transmission. The protein is Toxin Tpa4 of Tityus pachyurus (Colombian scorpion).